The sequence spans 504 residues: MWWFRRRDRAPLRATSSLSLRWRVMLLAMSMVAMVVVLMSFAVYAVISAALYSDIDNQLQSRAQLLIASGSLAADPGKAIEGTAYSDVNAMLVNPGQSIYTAQQPGQTLPVGAAEKAVIRGELFMSRRTTADQRVLAIRLTNGSSLLISKSLKPTEAVMNKLRWVLLIVGGIGVAVAAVAGGMVTRAGLRPVGRLTEAAERVARTDDLRPIPVFGSDELARLTEAFNLMLRALAESRERQARLVTDAGHELRTPLTSLRTNVELLMASMAPGAPRLPKQEMVDLRADVLAQIEELSTLVGDLVDLSRGDAGEVVHEPVDMADVVDRSLERVRRRRNDIHFDVEVIGWQVYGDTAGLSRMALNLMDNAAKWSPPGGHVGVRLSQLDASHAELVVSDRGPGIPVQERRLVFERFYRSASARALPGSGLGLAIVKQVVLNHGGLLRIEDTDPGGQPPGTSIYVLLPGRRMPIPQLPGATAGARSTDIENSRGSANVISVESQSTRAT.

The Cytoplasmic segment spans residues 1–26 (MWWFRRRDRAPLRATSSLSLRWRVML). A helical membrane pass occupies residues 27 to 47 (LAMSMVAMVVVLMSFAVYAVI). Residues 48-163 (SAALYSDIDN…PTEAVMNKLR (116 aa)) are Extracellular-facing. A helical transmembrane segment spans residues 164–184 (WVLLIVGGIGVAVAAVAGGMV). Topologically, residues 185-504 (TRAGLRPVGR…SVESQSTRAT (320 aa)) are cytoplasmic. Residues 186 to 238 (RAGLRPVGRLTEAAERVARTDDLRPIPVFGSDELARLTEAFNLMLRALAESRE) form the HAMP domain. The region spanning 246 to 466 (DAGHELRTPL…SIYVLLPGRR (221 aa)) is the Histidine kinase domain. The residue at position 249 (H249) is a Phosphohistidine; by autocatalysis. Residues 471-504 (QLPGATAGARSTDIENSRGSANVISVESQSTRAT) form a disordered region. Residues 487-504 (SRGSANVISVESQSTRAT) show a composition bias toward polar residues.

Requires Mg(2+) as cofactor. Mn(2+) serves as cofactor. In terms of processing, autophosphorylated.

The protein resides in the cell membrane. It carries out the reaction ATP + protein L-histidine = ADP + protein N-phospho-L-histidine.. In terms of biological role, member of the two-component regulatory system MprB/MprA which contributes to maintaining a balance among several systems involved in stress resistance and is required for establishment and maintenance of persistent infection in the host. In response to environmental signals MprB acts both as a membrane-associated protein kinase that undergoes autophosphorylation and subsequently transfers the phosphate to MprA, and a protein phosphatase that dephosphorylates phospho-MprA. MprB/MprA up-regulates expression of mprA and pepD. The sequence is that of Signal transduction histidine-protein kinase/phosphatase MprB (mprB) from Mycobacterium bovis (strain ATCC BAA-935 / AF2122/97).